We begin with the raw amino-acid sequence, 120 residues long: A-type ATP synthase subunit F (120 aa).

This sequence belongs to the V-ATPase F subunit family. In terms of assembly, has multiple subunits with at least A(3), B(3), C, D, E, F, H, I and proteolipid K(x).

It localises to the cell membrane. Functionally, component of the A-type ATP synthase that produces ATP from ADP in the presence of a proton gradient across the membrane. The protein is A-type ATP synthase subunit F of Halobacterium salinarum (strain ATCC 29341 / DSM 671 / R1).